Consider the following 115-residue polypeptide: Large ribosomal subunit protein bL19 (115 aa).

Belongs to the bacterial ribosomal protein bL19 family.

This protein is located at the 30S-50S ribosomal subunit interface and may play a role in the structure and function of the aminoacyl-tRNA binding site. The polypeptide is Large ribosomal subunit protein bL19 (Clostridium perfringens (strain ATCC 13124 / DSM 756 / JCM 1290 / NCIMB 6125 / NCTC 8237 / Type A)).